A 576-amino-acid polypeptide reads, in one-letter code: (+)-alpha-terpineol synthase (576 aa).

Arg286, Asp323, Asp327, Arg466, and Asn469 together coordinate (2E)-geranyl diphosphate. Asp323 and Asp327 together coordinate Mg(2+). The DDXXD motif motif lies at 323 to 327; sequence DDVYD. Asn469, Thr473, and Glu477 together coordinate Mg(2+).

It belongs to the terpene synthase family. Tpsb subfamily. Mg(2+) is required as a cofactor. The cofactor is Mn(2+).

The catalysed reaction is (2E,6E)-farnesyl diphosphate = beta-bisabolene + diphosphate. It carries out the reaction (2E)-geranyl diphosphate + H2O = (R)-alpha-terpineol + diphosphate. It catalyses the reaction (2E)-geranyl diphosphate = (4S)-limonene + diphosphate. It participates in secondary metabolite biosynthesis; terpenoid biosynthesis. Its function is as follows. Monoterpene synthase which catalyzes the conversion of (2E)-geranyl diphosphate (GPP) to (R)-alpha-terpineol and (4S)-limonene, as well as small quantities of linalool, myrcene, (-)-alpha-pinene, (+)-sabinene and geraniol. To a lower extent, catalyzes the conversion of (2E,6E)-farnesyl diphosphate (FPP) to beta-bisabolene. The protein is (+)-alpha-terpineol synthase of Santalum album (White sandalwood).